Reading from the N-terminus, the 249-residue chain is Solute carrier family 25 member 35 (249 aa).

Solcar repeat units follow at residues 1–90 and 152–243; these read MDFL…AEAG and QSWK…LRMV. 4 helical membrane-spanning segments follow: residues 38 to 58, 59 to 79, 154 to 174, and 226 to 249; these read TYQRHYRNVFHAFITIGKVDG, LAALQRGLAPALLYQFLMNGI, WKVALAAAMVSGIAVVLAMTP, and LGPHTILSLFFWDQLRMVYYTYTK.

The protein belongs to the mitochondrial carrier (TC 2.A.29) family.

The protein localises to the mitochondrion inner membrane. It carries out the reaction a dicarboxylate(in) + sulfate(out) = a dicarboxylate(out) + sulfate(in). Its function is as follows. Putative antiporter that exchanges dicarboxylates and sulfur oxoanions across the inner membrane of mitochondria. The sequence is that of Solute carrier family 25 member 35 (SLC25A35) from Bos taurus (Bovine).